Reading from the N-terminus, the 215-residue chain is Glutaredoxin 2 (215 aa).

The region spanning 1–77 (MKLYIYDHCP…YVDKLDGKPL (77 aa)) is the GST N-terminal domain. A disulfide bridge links C9 with C12.

This sequence belongs to the glutaredoxin family.

In terms of biological role, involved in reducing some disulfides in a coupled system with glutathione reductase. Does not act as hydrogen donor for ribonucleotide reductase. In Escherichia coli O157:H7, this protein is Glutaredoxin 2 (grxB).